The following is a 223-amino-acid chain: MVSFTSLLAGVAAISGVLAAPAAEVESVAVEKRQTIQPGTGYNNGYFYSYWNDGHGGVTYTNGPGGQFSVNWSNSGNFVGGKGWQPGTKNKVINFSGSYNPNGNSYLSVYGWSRNPLIEYYIVENFGTYNPSTGATKLGEVTSDGSVYDIYRTQRVNQPSIIGTATFYQYWSVRRNHRSSGSVNTANHFNAWAQQGLTLGTMDYQIVAVEGYFSSGSASITVS.

Positions 1–19 (MVSFTSLLAGVAAISGVLA) are cleaved as a signal peptide. Residues 20–33 (APAAEVESVAVEKR) constitute a propeptide that is removed on maturation. Gln-34 carries the post-translational modification Pyrrolidone carboxylic acid. Positions 34-222 (QTIQPGTGYN…FSSGSASITV (189 aa)) constitute a GH11 domain. N-linked (GlcNAc...) asparagine glycans are attached at residues Asn-71 and Asn-94. Substrate-binding residues include Tyr-106 and Tyr-110. Glu-119 (nucleophile) is an active-site residue. Substrate-binding residues include Tyr-121, Arg-155, Pro-159, Gln-169, and Tyr-204. Glu-210 functions as the Proton donor in the catalytic mechanism.

It belongs to the glycosyl hydrolase 11 (cellulase G) family.

It is found in the secreted. The catalysed reaction is Endohydrolysis of (1-&gt;4)-beta-D-xylosidic linkages in xylans.. It functions in the pathway glycan degradation; xylan degradation. Its function is as follows. Glycoside hydrolase involved in the hydrolysis of xylan, a major plant cell wall hemicellulose made up of 1,4-beta-linked D-xylopyranose residues. Catalyzes the endohydrolysis of the main-chain 1,4-beta-glycosidic bonds connecting the xylose subunits yielding various xylooligosaccharides and xylose. The catalysis proceeds by a double-displacement reaction mechanism with a putative covalent glycosyl-enzyme intermediate, with retention of the anomeric configuration. Produces xylobiose and xylose as the main degradation products. The sequence is that of Endo-1,4-beta-xylanase 2 from Hypocrea jecorina (strain ATCC 56765 / BCRC 32924 / NRRL 11460 / Rut C-30) (Trichoderma reesei).